We begin with the raw amino-acid sequence, 271 residues long: Large ribosomal subunit protein eL8 (271 aa).

Belongs to the eukaryotic ribosomal protein eL8 family.

This Drosophila melanogaster (Fruit fly) protein is Large ribosomal subunit protein eL8 (RpL7A).